A 333-amino-acid polypeptide reads, in one-letter code: Adenosine deaminase (333 aa).

His-12 and His-14 together coordinate Zn(2+). Substrate-binding residues include His-14, Asp-16, and Gly-170. Zn(2+) is bound at residue His-197. Residue Glu-200 is the Proton donor of the active site. Asp-278 contributes to the Zn(2+) binding site. Asp-279 contributes to the substrate binding site.

Belongs to the metallo-dependent hydrolases superfamily. Adenosine and AMP deaminases family. Adenosine deaminase subfamily. Zn(2+) serves as cofactor.

The catalysed reaction is adenosine + H2O + H(+) = inosine + NH4(+). It carries out the reaction 2'-deoxyadenosine + H2O + H(+) = 2'-deoxyinosine + NH4(+). Functionally, catalyzes the hydrolytic deamination of adenosine and 2-deoxyadenosine. This is Adenosine deaminase from Salmonella typhi.